We begin with the raw amino-acid sequence, 83 residues long: Small ribosomal subunit protein bS16 (83 aa).

This sequence belongs to the bacterial ribosomal protein bS16 family.

This is Small ribosomal subunit protein bS16 from Herminiimonas arsenicoxydans.